The primary structure comprises 580 residues: Long-chain-fatty-acid--AMP ligase FadD28 (580 aa).

The interval 421 to 440 is disordered; it reads SERTFGGKIVTPSPGTPEGP.

It belongs to the ATP-dependent AMP-binding enzyme family.

The enzyme catalyses holo-[mycocerosate synthase] + a long-chain fatty acid + ATP = a long-chain fatty acyl-[mycocerosate synthase] + AMP + diphosphate. It catalyses the reaction a long-chain fatty acid + ATP + H(+) = a long-chain fatty acyl-AMP + diphosphate. It carries out the reaction holo-[mycocerosate synthase] + a long-chain fatty acyl-AMP = a long-chain fatty acyl-[mycocerosate synthase] + AMP + H(+). The protein operates within lipid metabolism; fatty acid biosynthesis. Functionally, involved in the biosynthesis of phthiocerol dimycocerosate (PDIM), a cell wall-associated lipid found only in pathogenic mycobacteria. Catalyzes the activation of long-chain fatty acids as acyl-adenylates (acyl-AMP), which are then transferred to the multifunctional polyketide synthase Mas for further chain extension. In Mycobacterium bovis (strain ATCC BAA-935 / AF2122/97), this protein is Long-chain-fatty-acid--AMP ligase FadD28 (fadD28).